The sequence spans 695 residues: Elongation factor G (695 aa).

Positions 10-285 constitute a tr-type G domain; it reads DKTRNIGIMA…GVVDYLPSPL (276 aa). GTP contacts are provided by residues 19–26, 83–87, and 137–140; these read AHIDAGKT, DTPGH, and NKMD.

Belongs to the TRAFAC class translation factor GTPase superfamily. Classic translation factor GTPase family. EF-G/EF-2 subfamily.

The protein resides in the cytoplasm. Functionally, catalyzes the GTP-dependent ribosomal translocation step during translation elongation. During this step, the ribosome changes from the pre-translocational (PRE) to the post-translocational (POST) state as the newly formed A-site-bound peptidyl-tRNA and P-site-bound deacylated tRNA move to the P and E sites, respectively. Catalyzes the coordinated movement of the two tRNA molecules, the mRNA and conformational changes in the ribosome. This is Elongation factor G from Latilactobacillus sakei subsp. sakei (strain 23K) (Lactobacillus sakei subsp. sakei).